Reading from the N-terminus, the 371-residue chain is Cytochrome b (371 aa).

4 helical membrane passes run 25–45 (FGSMLLACSSMQVLTGFFLAV), 69–90 (WMMQNLHAIGASMFFICIYIHI), 105–125 (WLSGTTLLIMLMATAFFGYVL), and 170–190 (FFALHFILPFGIISLSSLHIM). Residues H75 and H89 each coordinate heme b. Positions 174 and 188 each coordinate heme b. H193 is a binding site for a ubiquinone. The next 4 helical transmembrane spans lie at 218–238 (YKDLLMLSLMVLMLLMTVSFL), 280–300 (LWGALALAMSITILLTVPFTH), 312–332 (IMQLMFWTLVATFMVITWAAT), and 339–358 (FTMISQIASTIYFLFLIMNP).

The protein belongs to the cytochrome b family. As to quaternary structure, the cytochrome bc1 complex contains 3 respiratory subunits (MT-CYB, CYC1 and UQCRFS1), 2 core proteins (UQCRC1 and UQCRC2) and probably 6 low-molecular weight proteins. Heme b is required as a cofactor.

The protein resides in the mitochondrion inner membrane. Functionally, component of the ubiquinol-cytochrome c reductase complex (complex III or cytochrome b-c1 complex) that is part of the mitochondrial respiratory chain. The b-c1 complex mediates electron transfer from ubiquinol to cytochrome c. Contributes to the generation of a proton gradient across the mitochondrial membrane that is then used for ATP synthesis. The sequence is that of Cytochrome b (MT-CYB) from Eryx miliaris nogaiorum (Black sand boa).